We begin with the raw amino-acid sequence, 262 residues long: Cerebellar degeneration-related antigen 1 (262 aa).

34 repeat units span residues tryptophan 3 to aspartate 8, phenylalanine 9 to proline 14, leucine 15 to proline 20, leucine 21 to proline 26, leucine 27 to proline 32, leucine 33 to serine 38, arginine 39 to asparagine 44, leucine 45 to alanine 50, leucine 51 to aspartate 56, leucine 57 to aspartate 62, phenylalanine 63 to aspartate 68, phenylalanine 69 to aspartate 74, leucine 75 to aspartate 80, phenylalanine 81 to aspartate 86, serine 87 to alanine 92, leucine 93 to aspartate 98, leucine 99 to aspartate 104, phenylalanine 105 to aspartate 110, phenylalanine 111 to aspartate 116, leucine 117 to aspartate 122, phenylalanine 123 to aspartate 128, serine 129 to glutamate 134, alanine 135 to glycine 140, phenylalanine 141 to glycine 146, phenylalanine 147 to arginine 152, phenylalanine 153 to lysine 158, leucine 159 to glycine 164, leucine 165 to glycine 170, phenylalanine 171 to glycine 176, glycine 177 to tryptophan 182, isoleucine 183 to tryptophan 188, isoleucine 189 to tryptophan 194, isoleucine 195 to tyrosine 200, and isoleucine 201 to tryptophan 206. Residues tryptophan 3–glycine 140 form a 23 X 6 AA approximate repeats region. Residues phenylalanine 141–glycine 176 form a 6 X 6 AA approximate repeats region. The 5 X 6 AA approximate repeats stretch occupies residues glycine 177–tryptophan 206.

Brain; predominantly expressed in normal neuroectodermal tissues and in certain malignant tumors.

This chain is Cerebellar degeneration-related antigen 1 (CDR1), found in Homo sapiens (Human).